The following is a 359-amino-acid chain: MATH domain and coiled-coil domain-containing protein At2g42475 (359 aa).

In terms of domain architecture, MATH spans 6 to 128 (KTSFTFEIEN…NDKLIITVEV (123 aa)). Residues 146–337 (EFKELQDLYN…NLELMVLDFK (192 aa)) adopt a coiled-coil conformation.

In Arabidopsis thaliana (Mouse-ear cress), this protein is MATH domain and coiled-coil domain-containing protein At2g42475.